The primary structure comprises 453 residues: Bifunctional protein GlmU (453 aa).

The interval 1–231 is pyrophosphorylase; sequence MERTCLAVIL…EIEMTGCNTR (231 aa). UDP-N-acetyl-alpha-D-glucosamine is bound by residues 10 to 13, K24, Q77, 82 to 83, 105 to 107, G143, E157, N172, and N229; these read LAAG, GT, and YGD. D107 serves as a coordination point for Mg(2+). Position 229 (N229) interacts with Mg(2+). Residues 232–252 form a linker region; sequence AELAVIERFWQERRRHQLMLS. The N-acetyltransferase stretch occupies residues 253–453; the sequence is GVTMIAPETV…ATKAAKKAKG (201 aa). 2 residues coordinate UDP-N-acetyl-alpha-D-glucosamine: R318 and K336. The active-site Proton acceptor is H348. Residues Y351 and N362 each contribute to the UDP-N-acetyl-alpha-D-glucosamine site. Acetyl-CoA-binding positions include A365, 371–372, S390, S408, and R425; that span reads NY.

The protein in the N-terminal section; belongs to the N-acetylglucosamine-1-phosphate uridyltransferase family. In the C-terminal section; belongs to the transferase hexapeptide repeat family. As to quaternary structure, homotrimer. It depends on Mg(2+) as a cofactor.

It is found in the cytoplasm. The catalysed reaction is alpha-D-glucosamine 1-phosphate + acetyl-CoA = N-acetyl-alpha-D-glucosamine 1-phosphate + CoA + H(+). The enzyme catalyses N-acetyl-alpha-D-glucosamine 1-phosphate + UTP + H(+) = UDP-N-acetyl-alpha-D-glucosamine + diphosphate. Its pathway is nucleotide-sugar biosynthesis; UDP-N-acetyl-alpha-D-glucosamine biosynthesis; N-acetyl-alpha-D-glucosamine 1-phosphate from alpha-D-glucosamine 6-phosphate (route II): step 2/2. It functions in the pathway nucleotide-sugar biosynthesis; UDP-N-acetyl-alpha-D-glucosamine biosynthesis; UDP-N-acetyl-alpha-D-glucosamine from N-acetyl-alpha-D-glucosamine 1-phosphate: step 1/1. The protein operates within bacterial outer membrane biogenesis; LPS lipid A biosynthesis. Catalyzes the last two sequential reactions in the de novo biosynthetic pathway for UDP-N-acetylglucosamine (UDP-GlcNAc). The C-terminal domain catalyzes the transfer of acetyl group from acetyl coenzyme A to glucosamine-1-phosphate (GlcN-1-P) to produce N-acetylglucosamine-1-phosphate (GlcNAc-1-P), which is converted into UDP-GlcNAc by the transfer of uridine 5-monophosphate (from uridine 5-triphosphate), a reaction catalyzed by the N-terminal domain. This Rhizobium leguminosarum bv. trifolii (strain WSM2304) protein is Bifunctional protein GlmU.